We begin with the raw amino-acid sequence, 362 residues long: Very-long-chain (3R)-3-hydroxyacyl-CoA dehydratase 3 (362 aa).

N-acetylmethionine is present on Met-1. Over 1–149 (MENQVLTPHV…ETLTNLRKGY (149 aa)) the chain is Cytoplasmic. Residues 5–94 (VLTPHVYWAQ…KVSQWWERLT (90 aa)) enclose the CS domain. Position 7 is a phosphothreonine (Thr-7). Positions 111 to 136 (LDESDAEMELRAKEEERLNKLRLESE) form a coiled coil. Phosphoserine is present on residues Ser-114 and Ser-135. The chain crosses the membrane as a helical span at residues 150 to 170 (LFMYNLVQFLGFSWIFVNLTV). Topologically, residues 171 to 185 (RFCILGKESFYDTFH) are lumenal. Residues 186–207 (TVADMMYFCQMLAVVETINAAI) traverse the membrane as a helical segment. Residues 208 to 217 (GVTTSPVLPS) are Cytoplasmic-facing. The chain crosses the membrane as a helical span at residues 218 to 235 (LIQLLGRNFILFIIFGTM). Over 236–241 (EEMQNK) the chain is Lumenal. Residues 242–256 (AVVFFVFYLWSAIEI) traverse the membrane as a helical segment. The Cytoplasmic segment spans residues 257–279 (FRYSFYMLTCIDMDWKVLTWLRY). A helical membrane pass occupies residues 280–298 (TLWIPLYPLGCLAEAVSVI). Catalysis depends on residues Tyr-286 and Glu-293. At 299–322 (QSIPIFNETGRFSFTLPYPVKIKV) the chain is on the lumenal side. A helical membrane pass occupies residues 323–343 (RFSFFLQIYLIMIFLGLYINF). The Cytoplasmic portion of the chain corresponds to 344–362 (RHLYKQRRRRYGQKKKKIH).

This sequence belongs to the very long-chain fatty acids dehydratase HACD family. As to quaternary structure, may interact with enzymes of the ELO family (including ELOVL1); with those enzymes that mediate condensation, the first of the four steps of the reaction cycle responsible for fatty acids elongation, may be part of a larger fatty acids elongase complex. Interacts with RAC1. Associates with internalized insulin receptor/INSR complexes on Golgi/endosomal membranes; HACD3/PTPLAD1 together with ATIC and PRKAA2/AMPK2 is proposed to be part of a signaling network regulating INSR autophosphorylation and endocytosis. Highly expressed in testis, kidney, brain, liver and weakly in skeletal muscle, spleen and heart. No expression detected in leukocytes.

Its subcellular location is the endoplasmic reticulum membrane. The enzyme catalyses a very-long-chain (3R)-3-hydroxyacyl-CoA = a very-long-chain (2E)-enoyl-CoA + H2O. It catalyses the reaction (3R)-hydroxyhexadecanoyl-CoA = (2E)-hexadecenoyl-CoA + H2O. It functions in the pathway lipid metabolism; fatty acid biosynthesis. Catalyzes the third of the four reactions of the long-chain fatty acids elongation cycle. This endoplasmic reticulum-bound enzymatic process, allows the addition of two carbons to the chain of long- and very long-chain fatty acids/VLCFAs per cycle. This enzyme catalyzes the dehydration of the 3-hydroxyacyl-CoA intermediate into trans-2,3-enoyl-CoA, within each cycle of fatty acid elongation. Thereby, it participates in the production of VLCFAs of different chain lengths that are involved in multiple biological processes as precursors of membrane lipids and lipid mediators. May be involved in Rac1-signaling pathways leading to the modulation of gene expression. Promotes insulin receptor/INSR autophosphorylation and is involved in INSR internalization. This chain is Very-long-chain (3R)-3-hydroxyacyl-CoA dehydratase 3, found in Homo sapiens (Human).